Reading from the N-terminus, the 258-residue chain is Large ribosomal subunit protein uL15c (258 aa).

The N-terminal 65 residues, 1-65, are a transit peptide targeting the chloroplast; sequence MSAASLIPVS…NVKSSGENVR (65 aa). Positions 67–90 are disordered; sequence RLDNLGPQPGSRKRPKRKGRGIAA. Positions 77–86 are enriched in basic residues; that stretch reads SRKRPKRKGR.

It belongs to the universal ribosomal protein uL15 family. As to quaternary structure, part of the 50S ribosomal subunit.

Its subcellular location is the plastid. The protein resides in the chloroplast. This Pisum sativum (Garden pea) protein is Large ribosomal subunit protein uL15c (RPL15).